Here is a 567-residue protein sequence, read N- to C-terminus: Proline--tRNA ligase (567 aa).

The protein belongs to the class-II aminoacyl-tRNA synthetase family. ProS type 1 subfamily. In terms of assembly, homodimer.

The protein localises to the cytoplasm. It catalyses the reaction tRNA(Pro) + L-proline + ATP = L-prolyl-tRNA(Pro) + AMP + diphosphate. In terms of biological role, catalyzes the attachment of proline to tRNA(Pro) in a two-step reaction: proline is first activated by ATP to form Pro-AMP and then transferred to the acceptor end of tRNA(Pro). As ProRS can inadvertently accommodate and process non-cognate amino acids such as alanine and cysteine, to avoid such errors it has two additional distinct editing activities against alanine. One activity is designated as 'pretransfer' editing and involves the tRNA(Pro)-independent hydrolysis of activated Ala-AMP. The other activity is designated 'posttransfer' editing and involves deacylation of mischarged Ala-tRNA(Pro). The misacylated Cys-tRNA(Pro) is not edited by ProRS. This Fusobacterium nucleatum subsp. nucleatum (strain ATCC 25586 / DSM 15643 / BCRC 10681 / CIP 101130 / JCM 8532 / KCTC 2640 / LMG 13131 / VPI 4355) protein is Proline--tRNA ligase.